Reading from the N-terminus, the 25-residue chain is Glucomannokinase (25 aa).

Belongs to the ROK (NagC/XylR) family. As to quaternary structure, homodimer.

It catalyses the reaction D-glucose + ATP = D-glucose 6-phosphate + ADP + H(+). It carries out the reaction D-mannose + ATP = D-mannose 6-phosphate + ADP + H(+). It functions in the pathway carbohydrate degradation; glycolysis; D-glyceraldehyde 3-phosphate and glycerone phosphate from D-glucose: step 1/4. Its pathway is carbohydrate metabolism; mannose metabolism. Its activity is regulated as follows. Competitively inhibited by 2-deoxy-glucose. In terms of biological role, the enzyme has great affinity for glucose and mannose. The sequence is that of Glucomannokinase from Segatella bryantii (Prevotella bryantii).